Consider the following 273-residue polypeptide: 2,3,4,5-tetrahydropyridine-2,6-dicarboxylate N-succinyltransferase (273 aa).

2 residues coordinate substrate: arginine 104 and aspartate 141.

It belongs to the transferase hexapeptide repeat family. As to quaternary structure, homotrimer.

It localises to the cytoplasm. It carries out the reaction (S)-2,3,4,5-tetrahydrodipicolinate + succinyl-CoA + H2O = (S)-2-succinylamino-6-oxoheptanedioate + CoA. It functions in the pathway amino-acid biosynthesis; L-lysine biosynthesis via DAP pathway; LL-2,6-diaminopimelate from (S)-tetrahydrodipicolinate (succinylase route): step 1/3. The protein is 2,3,4,5-tetrahydropyridine-2,6-dicarboxylate N-succinyltransferase of Neisseria meningitidis serogroup B (strain ATCC BAA-335 / MC58).